The sequence spans 147 residues: Cytochrome c-type biogenesis protein CcmE (147 aa).

Topologically, residues 1–7 (MTVRQRR) are cytoplasmic. A helical; Signal-anchor for type II membrane protein transmembrane segment spans residues 8-28 (FAMVILVVIGVSIATGLGLKA). Over 29–147 (FQENILFFYN…KTKANTEDKL (119 aa)) the chain is Periplasmic. 2 residues coordinate heme: H123 and Y127.

It belongs to the CcmE/CycJ family.

The protein localises to the cell inner membrane. In terms of biological role, heme chaperone required for the biogenesis of c-type cytochromes. Transiently binds heme delivered by CcmC and transfers the heme to apo-cytochromes in a process facilitated by CcmF and CcmH. This is Cytochrome c-type biogenesis protein CcmE from Nitrosococcus oceani (strain ATCC 19707 / BCRC 17464 / JCM 30415 / NCIMB 11848 / C-107).